Consider the following 308-residue polypeptide: D-alanine--D-alanine ligase (308 aa).

Positions 105–302 (KAIFRSLGLA…FPDLCDRILD (198 aa)) constitute an ATP-grasp domain. Residue 133-188 (DLPFGLPCVVKPAGEGSSVGVHLVNAAAELGPACRDAAGYAGDVIVERYVKGTEVD) coordinates ATP. Mg(2+) contacts are provided by Asp256, Glu269, and Asn271.

Belongs to the D-alanine--D-alanine ligase family. The cofactor is Mg(2+). It depends on Mn(2+) as a cofactor.

It localises to the cytoplasm. It carries out the reaction 2 D-alanine + ATP = D-alanyl-D-alanine + ADP + phosphate + H(+). Its pathway is cell wall biogenesis; peptidoglycan biosynthesis. In terms of biological role, cell wall formation. The chain is D-alanine--D-alanine ligase from Anaeromyxobacter dehalogenans (strain 2CP-C).